The sequence spans 503 residues: 2-(3-amino-3-carboxypropyl)histidine synthase subunit 2 (503 aa).

Residues Cys-93, Cys-114, and Cys-334 each coordinate [4Fe-4S] cluster. The tract at residues Gly-464 to Lys-503 is disordered. A compositionally biased stretch (basic and acidic residues) spans Gly-492 to Lys-503.

It belongs to the DPH1/DPH2 family. DPH2 subfamily. As to quaternary structure, component of the 2-(3-amino-3-carboxypropyl)histidine synthase complex composed of dph1, dph2, dph3 and a NADH-dependent reductase, predominantly cbr1. [4Fe-4S] cluster serves as cofactor.

It localises to the cytoplasm. It functions in the pathway protein modification; peptidyl-diphthamide biosynthesis. Its function is as follows. Required for the first step of diphthamide biosynthesis, a post-translational modification of histidine which occurs in elongation factor 2. Dph1 and dph2 transfer a 3-amino-3-carboxypropyl (ACP) group from S-adenosyl-L-methionine (SAM) to a histidine residue, the reaction is assisted by a reduction system comprising dph3 and a NADH-dependent reductase, predominantly cbr1. Facilitates the reduction of the catalytic iron-sulfur cluster found in the dph1 subunit. This chain is 2-(3-amino-3-carboxypropyl)histidine synthase subunit 2, found in Schizosaccharomyces pombe (strain 972 / ATCC 24843) (Fission yeast).